Here is a 453-residue protein sequence, read N- to C-terminus: MSAIFAERALLPEGWARNVRFEISADGVLAEIRPDANADGAERLGGAVLPGMPNLHSHAFQRAMAGLAEVAGNPNDSFWTWRELMYRMVARLSPEQIEVIACQLYIEMLKAGYTAVAEFHYVHHDLDGRSYADPAELSLRISRAASAAGIGLTLLPVLYSHAGFGGQPASEGQRRFINGSEAYLELLQRLRAPLEAAGHSLGLCFHSLRAVTPQQIATVLAAGHDDLPVHIHIAEQQKEVDDCQAWSGRRPLQWLYENVAVDQRWCLVHATHADPAEVAAMARSGAVAGLCLSTEANLGDGIFPATDFLAQGGRLGIGSDSHVSLSVVEELRWLEYGQRLRDRKRNRLYRDDQPMIGRTLYDAALAGGAQALGQPIGSLAVGRRADLLVLDGNDPYLASAEGDALLNRWLFAGGDRQVRDVMVAGRWVVRDGRHAGEERSARAFVQVLGELLD.

Residues His56 and His58 each coordinate Zn(2+). N-formimidoyl-L-glutamate-binding residues include Gln61, Arg82, Tyr121, His206, and Arg209. His232 contributes to the Zn(2+) binding site. Position 235 (Glu235) interacts with N-formimidoyl-L-glutamate. Active-site proton acceptor residues include His269 and Asp320. Asp320 provides a ligand contact to Zn(2+).

It belongs to the metallo-dependent hydrolases superfamily. As to quaternary structure, homodimer. Zn(2+) serves as cofactor.

The enzyme catalyses N-formimidoyl-L-glutamate + H2O = N-formyl-L-glutamate + NH4(+). The protein operates within amino-acid degradation; L-histidine degradation into L-glutamate; L-glutamate from N-formimidoyl-L-glutamate (deiminase route): step 1/2. Its activity is regulated as follows. Inhibited by the metal chelator dipicolinate. Inhibited by N-formimino-L-aspartate and N-guanidino-L-glutaric acid. Functionally, catalyzes the hydrolysis of N-formimino-L-glutamate to N-formyl-L-glutamate and ammonia. The protein is Formimidoylglutamate deiminase of Pseudomonas aeruginosa (strain ATCC 15692 / DSM 22644 / CIP 104116 / JCM 14847 / LMG 12228 / 1C / PRS 101 / PAO1).